The chain runs to 599 residues: NADH-quinone oxidoreductase subunit C/D (599 aa).

Residues 1–189 (MTELMTQNSA…DPFVLTKQKE (189 aa)) form an NADH dehydrogenase I subunit C region. Positions 213-599 (DFMFLNLGPN…IDFVMSDVDR (387 aa)) are NADH dehydrogenase I subunit D.

It in the N-terminal section; belongs to the complex I 30 kDa subunit family. This sequence in the C-terminal section; belongs to the complex I 49 kDa subunit family. In terms of assembly, NDH-1 is composed of 13 different subunits. Subunits NuoB, CD, E, F, and G constitute the peripheral sector of the complex.

It is found in the cell inner membrane. The enzyme catalyses a quinone + NADH + 5 H(+)(in) = a quinol + NAD(+) + 4 H(+)(out). NDH-1 shuttles electrons from NADH, via FMN and iron-sulfur (Fe-S) centers, to quinones in the respiratory chain. The immediate electron acceptor for the enzyme in this species is believed to be ubiquinone. Couples the redox reaction to proton translocation (for every two electrons transferred, four hydrogen ions are translocated across the cytoplasmic membrane), and thus conserves the redox energy in a proton gradient. The sequence is that of NADH-quinone oxidoreductase subunit C/D from Sodalis glossinidius (strain morsitans).